We begin with the raw amino-acid sequence, 176 residues long: Protein GrpE (176 aa).

It belongs to the GrpE family. In terms of assembly, homodimer.

It is found in the cytoplasm. Its function is as follows. Participates actively in the response to hyperosmotic and heat shock by preventing the aggregation of stress-denatured proteins, in association with DnaK and GrpE. It is the nucleotide exchange factor for DnaK and may function as a thermosensor. Unfolded proteins bind initially to DnaJ; upon interaction with the DnaJ-bound protein, DnaK hydrolyzes its bound ATP, resulting in the formation of a stable complex. GrpE releases ADP from DnaK; ATP binding to DnaK triggers the release of the substrate protein, thus completing the reaction cycle. Several rounds of ATP-dependent interactions between DnaJ, DnaK and GrpE are required for fully efficient folding. In Rickettsia bellii (strain OSU 85-389), this protein is Protein GrpE.